Here is a 322-residue protein sequence, read N- to C-terminus: 4-diphosphocytidyl-2-C-methyl-D-erythritol kinase (322 aa).

K18 is an active-site residue. 130–140 (PMGAGLGGGSS) is a binding site for ATP. The active site involves D172.

This sequence belongs to the GHMP kinase family. IspE subfamily.

The enzyme catalyses 4-CDP-2-C-methyl-D-erythritol + ATP = 4-CDP-2-C-methyl-D-erythritol 2-phosphate + ADP + H(+). The protein operates within isoprenoid biosynthesis; isopentenyl diphosphate biosynthesis via DXP pathway; isopentenyl diphosphate from 1-deoxy-D-xylulose 5-phosphate: step 3/6. Catalyzes the phosphorylation of the position 2 hydroxy group of 4-diphosphocytidyl-2C-methyl-D-erythritol. The polypeptide is 4-diphosphocytidyl-2-C-methyl-D-erythritol kinase (Psychrobacter arcticus (strain DSM 17307 / VKM B-2377 / 273-4)).